Reading from the N-terminus, the 267-residue chain is Proteasome assembly chaperone 2 (267 aa).

Belongs to the PSMG2 family. In terms of assembly, component of the 20S proteasome chaperone. Forms a heterodimer with PBA1 that binds to proteasome precursors.

It is found in the cytoplasm. Its function is as follows. Involved in 20S proteasome assembly. Required for maximal proteasome activity. Affects the chymotrypsin-like activity of the proteasome. Can be degraded by the proteasome. Involved in the endoplasmic reticulum-associated degradation (ERAD). This Saccharomyces cerevisiae (strain ATCC 204508 / S288c) (Baker's yeast) protein is Proteasome assembly chaperone 2 (ADD66).